A 309-amino-acid chain; its full sequence is Ribonuclease Z (309 aa).

Zn(2+) is bound by residues His63, His65, Asp67, His68, His145, Asp216, and His274. Catalysis depends on Asp67, which acts as the Proton acceptor.

The protein belongs to the RNase Z family. Homodimer. It depends on Zn(2+) as a cofactor.

The enzyme catalyses Endonucleolytic cleavage of RNA, removing extra 3' nucleotides from tRNA precursor, generating 3' termini of tRNAs. A 3'-hydroxy group is left at the tRNA terminus and a 5'-phosphoryl group is left at the trailer molecule.. Its function is as follows. Zinc phosphodiesterase, which displays some tRNA 3'-processing endonuclease activity. Probably involved in tRNA maturation, by removing a 3'-trailer from precursor tRNA. This chain is Ribonuclease Z, found in Streptococcus pyogenes serotype M1.